The sequence spans 498 residues: Angiopoietin-1 (498 aa).

The signal sequence occupies residues 1–19 (MTVFLSFAFFAAILTHIGC). Residues 81-119 (QKLQHLEHVMENYTQWLQKLENYIVENMKSEMAQIQQNA) adopt a coiled-coil conformation. N-linked (GlcNAc...) asparagine glycosylation is found at asparagine 92, asparagine 122, asparagine 154, asparagine 243, and asparagine 295. Residues 153-261 (LNQTSRLEIQ…LELMDTVHNL (109 aa)) adopt a coiled-coil conformation. Positions 277 to 497 (REEEKPFRDC…STTMMIRPLD (221 aa)) constitute a Fibrinogen C-terminal domain. 2 disulfides stabilise this stretch: cysteine 286–cysteine 315 and cysteine 439–cysteine 452.

As to quaternary structure, homooligomer. Interacts with TEK/TIE2. Interacts with SVEP1/polydom. Interacts with THBD; this interaction significantly inhibits the generation of activated PC and TAFIa/CPB2 by the thrombin/thrombomodulin complex.

Its subcellular location is the secreted. Binds and activates TEK/TIE2 receptor by inducing its dimerization and tyrosine phosphorylation. Plays an important role in the regulation of angiogenesis, endothelial cell survival, proliferation, migration, adhesion and cell spreading, reorganization of the actin cytoskeleton, but also maintenance of vascular quiescence. Required for normal angiogenesis and heart development during embryogenesis. After birth, activates or inhibits angiogenesis, depending on the context. Inhibits angiogenesis and promotes vascular stability in quiescent vessels, where endothelial cells have tight contacts. In quiescent vessels, ANGPT1 oligomers recruit TEK to cell-cell contacts, forming complexes with TEK molecules from adjoining cells, and this leads to preferential activation of phosphatidylinositol 3-kinase and the AKT1 signaling cascades. In migrating endothelial cells that lack cell-cell adhesions, ANGT1 recruits TEK to contacts with the extracellular matrix, leading to the formation of focal adhesion complexes, activation of PTK2/FAK and of the downstream kinases MAPK1/ERK2 and MAPK3/ERK1, and ultimately to the stimulation of sprouting angiogenesis. Mediates blood vessel maturation/stability. Implicated in endothelial developmental processes later and distinct from that of VEGF. Appears to play a crucial role in mediating reciprocal interactions between the endothelium and surrounding matrix and mesenchyme. The chain is Angiopoietin-1 (Angpt1) from Mus musculus (Mouse).